The following is an 81-amino-acid chain: YIVMISLALVVMIGVESVRDGYIVYPNNCVYHCIPACDGLCKKNGGTSGSCSFLIGSGIACWCKDLPDNVPIKDPSQKCTR.

The N-terminal stretch at tyrosine 1–serine 17 is a signal peptide. Residues arginine 19–threonine 80 form the LCN-type CS-alpha/beta domain. Intrachain disulfides connect cysteine 29–cysteine 79, cysteine 33–cysteine 51, cysteine 37–cysteine 61, and cysteine 41–cysteine 63.

The protein belongs to the long (4 C-C) scorpion toxin superfamily. Sodium channel inhibitor family. Alpha subfamily. Expressed by the venom gland.

Its subcellular location is the secreted. Functionally, alpha toxins bind voltage-independently at site-3 of sodium channels (Nav) and inhibit the inactivation of the activated channels, thereby blocking neuronal transmission. In Androctonus crassicauda (Arabian fat-tailed scorpion), this protein is Alpha-toxin Ac1.